A 439-amino-acid chain; its full sequence is Diaminopimelate decarboxylase (439 aa).

N6-(pyridoxal phosphate)lysine is present on Lys-66. Pyridoxal 5'-phosphate-binding positions include Gly-248 and 290–293 (EPGR). Residues Arg-293, Arg-330, and Tyr-334 each contribute to the substrate site. The active-site Proton donor is the Cys-361. Residues Glu-362 and Tyr-390 each contribute to the substrate site. A pyridoxal 5'-phosphate-binding site is contributed by Tyr-390.

This sequence belongs to the Orn/Lys/Arg decarboxylase class-II family. LysA subfamily. In terms of assembly, homodimer. Pyridoxal 5'-phosphate serves as cofactor.

It carries out the reaction meso-2,6-diaminopimelate + H(+) = L-lysine + CO2. It functions in the pathway amino-acid biosynthesis; L-lysine biosynthesis via DAP pathway; L-lysine from DL-2,6-diaminopimelate: step 1/1. Its function is as follows. Specifically catalyzes the decarboxylation of meso-diaminopimelate (meso-DAP) to L-lysine. The sequence is that of Diaminopimelate decarboxylase from Halalkalibacterium halodurans (strain ATCC BAA-125 / DSM 18197 / FERM 7344 / JCM 9153 / C-125) (Bacillus halodurans).